Here is a 479-residue protein sequence, read N- to C-terminus: Ribulose bisphosphate carboxylase large chain (479 aa).

Positions 1-2 (MS) are excised as a propeptide. Positions 123 and 173 each coordinate substrate. The active-site Proton acceptor is Lys-175. Residue Lys-177 coordinates substrate. Positions 201, 203, and 204 each coordinate Mg(2+). Lys-201 carries the N6-carboxylysine modification. Ser-208 is subject to Phosphoserine. The active-site Proton acceptor is His-294. Substrate is bound by residues Arg-295 and His-327. A Phosphothreonine modification is found at Thr-330. Position 379 (Ser-379) interacts with substrate.

It belongs to the RuBisCO large chain family. Type I subfamily. In terms of assembly, heterohexadecamer of 8 large chains and 8 small chains; disulfide-linked. The disulfide link is formed within the large subunit homodimers. Mg(2+) is required as a cofactor. The disulfide bond which can form in the large chain dimeric partners within the hexadecamer appears to be associated with oxidative stress and protein turnover.

It is found in the plastid. The protein localises to the chloroplast. It catalyses the reaction 2 (2R)-3-phosphoglycerate + 2 H(+) = D-ribulose 1,5-bisphosphate + CO2 + H2O. The catalysed reaction is D-ribulose 1,5-bisphosphate + O2 = 2-phosphoglycolate + (2R)-3-phosphoglycerate + 2 H(+). Functionally, ruBisCO catalyzes two reactions: the carboxylation of D-ribulose 1,5-bisphosphate, the primary event in carbon dioxide fixation, as well as the oxidative fragmentation of the pentose substrate in the photorespiration process. Both reactions occur simultaneously and in competition at the same active site. The polypeptide is Ribulose bisphosphate carboxylase large chain (Lobularia maritima (Sweet alyssum)).